We begin with the raw amino-acid sequence, 141 residues long: Large ribosomal subunit protein uL11 (141 aa).

This sequence belongs to the universal ribosomal protein uL11 family. Part of the ribosomal stalk of the 50S ribosomal subunit. Interacts with L10 and the large rRNA to form the base of the stalk. L10 forms an elongated spine to which L12 dimers bind in a sequential fashion forming a multimeric L10(L12)X complex. One or more lysine residues are methylated.

In terms of biological role, forms part of the ribosomal stalk which helps the ribosome interact with GTP-bound translation factors. The sequence is that of Large ribosomal subunit protein uL11 from Natranaerobius thermophilus (strain ATCC BAA-1301 / DSM 18059 / JW/NM-WN-LF).